The sequence spans 20 residues: Luminal-binding protein (20 aa).

Belongs to the heat shock protein 70 family.

The protein resides in the endoplasmic reticulum lumen. Its function is as follows. Probably plays a role in facilitating the assembly of multimeric protein complexes inside the ER. This Phaseolus vulgaris (Kidney bean) protein is Luminal-binding protein.